The following is a 206-amino-acid chain: Recombination protein RecR (206 aa).

A C4-type zinc finger spans residues 58 to 73 (CNICGYITEKNICNFC). One can recognise a Toprim domain in the interval 81–178 (STIMIVADNR…KITKLAYGIP (98 aa)).

Belongs to the RecR family.

Its function is as follows. May play a role in DNA repair. It seems to be involved in an RecBC-independent recombinational process of DNA repair. It may act with RecF and RecO. The sequence is that of Recombination protein RecR from Phytoplasma mali (strain AT).